The sequence spans 561 residues: uncharacterized protein (561 aa).

Disordered stretches follow at residues 369–390 (SVPENGKPNMGRIPSAPSLSKG) and 429–515 (EGLG…GESE). A Phosphoserine modification is found at Ser383. Over residues 465 to 503 (NISPESSRFGTPSDPNSSSQSLGNEVLSRPNSNSNSAES) the composition is skewed to polar residues.

This is an uncharacterized protein from Schizosaccharomyces pombe (strain 972 / ATCC 24843) (Fission yeast).